The chain runs to 761 residues: Probable ubiquitin carboxyl-terminal hydrolase creB (761 aa).

Residues 1–45 (MGSFLRSFRHNGGSTAPSVGAVPAKKEPQPPPMTPLEKRLLDMGP) are disordered. Over residues 36–45 (LEKRLLDMGP) the composition is skewed to basic and acidic residues. Residues 55–468 (YGMENYGNTC…CAYVLFYQET (414 aa)) enclose the USP domain. The active-site Nucleophile is the C64. 2 disordered regions span residues 113–146 (EAEA…DSPE) and 242–269 (PLME…KTPN). The segment covering 256–269 (SVDQSSSTGSKTPN) has biased composition (polar residues). H419 (proton acceptor) is an active-site residue. The interval 496–761 (LKQNGFPQSP…LRKKSFSILS (266 aa)) is disordered. The segment covering 555 to 566 (PLSPVPPVPPIP) has biased composition (pro residues). The stretch at 577-640 (KNDALAKREE…ASKAEEDRRL (64 aa)) forms a coiled coil. Positions 580-649 (ALAKREEKER…LSTENGKEKQ (70 aa)) are enriched in basic and acidic residues. The span at 655–666 (RLKRGSKSLSHR) shows a compositional bias: basic residues. Positions 692–710 (SQSGPTSEQQQQQRQQSPP) are enriched in low complexity. Residues 712 to 722 (HDQPPNSPQPG) show a composition bias toward pro residues. Residues 725–743 (TIREDEQVNHKDSKHERTG) show a composition bias toward basic and acidic residues. The segment covering 744-761 (HGKWRSFSLRKKSFSILS) has biased composition (basic residues).

It belongs to the peptidase C19 family. As to quaternary structure, interacts with creA, creC and qutD.

It catalyses the reaction Thiol-dependent hydrolysis of ester, thioester, amide, peptide and isopeptide bonds formed by the C-terminal Gly of ubiquitin (a 76-residue protein attached to proteins as an intracellular targeting signal).. In terms of biological role, ubiquitin thioesterase component of the regulatory network controlling carbon source utilization through ubiquitination and deubiquitination involving creA, creB, creC, creD and acrB. Deubiquitinates the creA catabolic repressor and the quinate permease qutD. Also plays a role in response to carbon starvation and the control of extracellular proteases activity. This chain is Probable ubiquitin carboxyl-terminal hydrolase creB (creB), found in Neosartorya fischeri (strain ATCC 1020 / DSM 3700 / CBS 544.65 / FGSC A1164 / JCM 1740 / NRRL 181 / WB 181) (Aspergillus fischerianus).